Here is a 326-residue protein sequence, read N- to C-terminus: Phospho-N-acetylmuramoyl-pentapeptide-transferase (326 aa).

The next 10 helical transmembrane spans lie at 2-22 (ILAT…FPYF), 51-71 (VPPM…LLWV), 73-93 (LTPE…LGFI), 113-133 (ILIQ…YSAE), 143-163 (GVII…IVGS), 175-195 (GLAA…AYIT), 199-219 (MNIT…LWFN), 225-245 (IFMG…TSVL), 250-270 (MLFA…IIQI), and 305-325 (VIVM…ITFL).

Belongs to the glycosyltransferase 4 family. MraY subfamily. The cofactor is Mg(2+).

The protein resides in the cell membrane. The enzyme catalyses UDP-N-acetyl-alpha-D-muramoyl-L-alanyl-gamma-D-glutamyl-meso-2,6-diaminopimeloyl-D-alanyl-D-alanine + di-trans,octa-cis-undecaprenyl phosphate = di-trans,octa-cis-undecaprenyl diphospho-N-acetyl-alpha-D-muramoyl-L-alanyl-D-glutamyl-meso-2,6-diaminopimeloyl-D-alanyl-D-alanine + UMP. The protein operates within cell wall biogenesis; peptidoglycan biosynthesis. In terms of biological role, catalyzes the initial step of the lipid cycle reactions in the biosynthesis of the cell wall peptidoglycan: transfers peptidoglycan precursor phospho-MurNAc-pentapeptide from UDP-MurNAc-pentapeptide onto the lipid carrier undecaprenyl phosphate, yielding undecaprenyl-pyrophosphoryl-MurNAc-pentapeptide, known as lipid I. The polypeptide is Phospho-N-acetylmuramoyl-pentapeptide-transferase (Wolbachia sp. subsp. Drosophila simulans (strain wRi)).